The primary structure comprises 345 residues: Trace amine-associated receptor 6 (345 aa).

The Extracellular segment spans residues 1–32 (MGSNSSPPTVLQLCYENVTGSCVKTPYSPGSR). N-linked (GlcNAc...) asparagine glycosylation occurs at Asn-17. 2 cysteine pairs are disulfide-bonded: Cys-22-Cys-186 and Cys-105-Cys-190. Residues 33 to 53 (VILYAVFGFGAVLAVFGNLMV) form a helical membrane-spanning segment. Topologically, residues 54 to 68 (MISILHFKQLHSPTN) are cytoplasmic. A helical transmembrane segment spans residues 69-89 (FLIASLACADFGVGISVMPFS). Residues 90–107 (MVRSIESCWYFGRSFCTF) are Extracellular-facing. Residues 108–128 (HTCCDVAFCYSSLFHLSFISI) form a helical membrane-spanning segment. Topologically, residues 129-147 (DRYIAVTDPLVYPTKFTVS) are cytoplasmic. The helical transmembrane segment at 148 to 168 (VSGICIGVSWILPLVYSGAVF) threads the bilayer. The Extracellular portion of the chain corresponds to 169–202 (YTGVYDDGLEELSSALNCVGGCQVVVNQNWVLID). The segment at 174–187 (DDGLEELSSALNCV) is extracellular Loop 2 (ECL2). A helical membrane pass occupies residues 203–223 (FLSFLIPTLVMIILYGNIFLV). Residues 224–259 (ARQQAKKIENIGSKTESSSESYKARVARRERKAAKT) lie on the Cytoplasmic side of the membrane. The chain crosses the membrane as a helical span at residues 260–276 (LGITVVAFMISWLPYSI). Residues 277-282 (DSLVDA) lie on the Extracellular side of the membrane. The helical transmembrane segment at 283–302 (FMGFITPAYIYEICVWCAYY) threads the bilayer. Residues 303–345 (NSAMNPLIYALFYPWFKKAIKVIMSGQVFKNSSATMNLFSEQI) are Cytoplasmic-facing.

This sequence belongs to the G-protein coupled receptor 1 family. As to expression, specifically expressed in neurons of the olfactory epithelium, to discrete glomeruli predominantly localized to a confined bulb region. Present in a ventral area of the main olfactory epithelium.

The protein resides in the cell membrane. Functionally, olfactory receptor specific for trace amines, such as beta-phenylethylamine (beta-PEA). Trace amine compounds are enriched in animal body fluids and act on trace amine-associated receptors (TAARs) to elicit both intraspecific and interspecific innate behaviors. Beta-PEA-binding causes a conformation change that triggers signaling via G(s)-class of G alpha proteins (GNAL or GNAS). The protein is Trace amine-associated receptor 6 of Mus musculus (Mouse).